The primary structure comprises 404 residues: Ribosomal RNA large subunit methyltransferase F (404 aa).

Composition is skewed to basic residues over residues 1 to 10 (MTKHSQKQNR) and 18 to 29 (QTRRKKPAGKLK). 3 disordered regions span residues 1 to 54 (MTKH…HERN), 156 to 177 (GTRQ…QRYK), and 289 to 308 (RAAK…PDAN). The segment covering 30–54 (AKSEAKLDTRGKPETTEKKGLHERN) has biased composition (basic and acidic residues). Polar residues predominate over residues 157–172 (TRQNVPYASKPESSAP).

The protein belongs to the methyltransferase superfamily. METTL16/RlmF family.

The protein resides in the cytoplasm. It catalyses the reaction adenosine(1618) in 23S rRNA + S-adenosyl-L-methionine = N(6)-methyladenosine(1618) in 23S rRNA + S-adenosyl-L-homocysteine + H(+). Functionally, specifically methylates the adenine in position 1618 of 23S rRNA. This Shewanella sediminis (strain HAW-EB3) protein is Ribosomal RNA large subunit methyltransferase F.